The following is a 229-amino-acid chain: MTNAAQLTALLHLASPALPVGAFSYSQGLEAAVDVRRVADEASAAAWIAEGLDVLAACEAPLWLLQFADWQAGRFDAVAERDAWFLATRETRELRLETSQMGWSLNRLIQQMAWGDDALRSALAACASVTFPTAFAAAAAALNVDPRDGVTAYCFAWVENQMAAAVKAVPLGQAAGQRILFGLHAAVARAVEEATRRAACHPPELSTFSPGLGVLSARHETQYSRLFRS.

Belongs to the UreF family. As to quaternary structure, ureD, UreF and UreG form a complex that acts as a GTP-hydrolysis-dependent molecular chaperone, activating the urease apoprotein by helping to assemble the nickel containing metallocenter of UreC. The UreE protein probably delivers the nickel.

It localises to the cytoplasm. Required for maturation of urease via the functional incorporation of the urease nickel metallocenter. This Ralstonia pickettii (strain 12J) protein is Urease accessory protein UreF.